The sequence spans 79 residues: Succinate dehydrogenase assembly factor 1, mitochondrial (79 aa).

The protein belongs to the complex I LYR family. SDHAF1 subfamily. Interacts with SDH2 within an SDH1-SDH2 subcomplex.

The protein localises to the mitochondrion matrix. Its function is as follows. Plays an essential role in the assembly of succinate dehydrogenase (SDH), an enzyme complex (also referred to as respiratory complex II) that is a component of both the tricarboxylic acid (TCA) cycle and the mitochondrial electron transport chain, and which couples the oxidation of succinate to fumarate with the reduction of ubiquinone (coenzyme Q) to ubiquinol. Promotes maturation of the iron-sulfur protein subunit SDH2 of the SDH catalytic dimer, protecting it from the deleterious effects of oxidants. Acts together with SDHAF3 (SDH7). The polypeptide is Succinate dehydrogenase assembly factor 1, mitochondrial (Saccharomyces cerevisiae (strain YJM789) (Baker's yeast)).